The sequence spans 430 residues: Ribulose bisphosphate carboxylase (430 aa).

K160 (proton acceptor) is an active-site residue. K162 contributes to the substrate binding site. Mg(2+) is bound by residues K186, D188, and E189. The residue at position 186 (K186) is an N6-carboxylysine. Residue H278 is the Proton acceptor of the active site. Substrate-binding positions include R279, H311, 348–350 (SGG), and 370–373 (QAGG).

Belongs to the RuBisCO large chain family. Type III subfamily. Homodimer or homodecamer. In contrast to form I RuBisCO, the form III RuBisCO is composed solely of large subunits. Mg(2+) is required as a cofactor.

The enzyme catalyses 2 (2R)-3-phosphoglycerate + 2 H(+) = D-ribulose 1,5-bisphosphate + CO2 + H2O. The catalysed reaction is D-ribulose 1,5-bisphosphate + O2 = 2-phosphoglycolate + (2R)-3-phosphoglycerate + 2 H(+). Functionally, catalyzes the addition of molecular CO(2) and H(2)O to ribulose 1,5-bisphosphate (RuBP), generating two molecules of 3-phosphoglycerate (3-PGA). Functions in an archaeal AMP degradation pathway, together with AMP phosphorylase and R15P isomerase. The sequence is that of Ribulose bisphosphate carboxylase from Pyrococcus horikoshii (strain ATCC 700860 / DSM 12428 / JCM 9974 / NBRC 100139 / OT-3).